The following is a 428-amino-acid chain: NADH-ubiquinone oxidoreductase chain 2 (428 aa).

Helical transmembrane passes span 22–42 (IAFLSLLGYFVIMLNIWLHFG), 59–79 (LDESILSALLFILFLGLVIMN), 84–104 (LGWEFHLLLMGGLTGAIYMLT), 108–128 (LLLMVVGFEFLNLSTYLILSL), 140–160 (LLSSAFYTTLLLLAISFFYGL), 185–205 (ILLLGTIAFKLGLVPAHLWVP), 218–238 (WMGSVPKAAVLLWLPTIYPLL), 241–261 (LAPFLLVLSALSFLLSAVLMA), 269–289 (FLAYSAIGHLGFVVAAFAIGD), 292–312 (AYGYYIFIYMIATLAQFVLLS), 332–352 (LGLGFLVIVLTMASLPPFAGF), 356–376 (LLVLFGFLEIGYGIFAVLLIL), 384–404 (YYLKWIQTTFFSVVPFASAPI), and 408–428 (YPNLVSFLVTLILPSTLLLLL).

It belongs to the complex I subunit 2 family.

Its subcellular location is the mitochondrion inner membrane. The enzyme catalyses a ubiquinone + NADH + 5 H(+)(in) = a ubiquinol + NAD(+) + 4 H(+)(out). Core subunit of the mitochondrial membrane respiratory chain NADH dehydrogenase (Complex I) that is believed to belong to the minimal assembly required for catalysis. Complex I functions in the transfer of electrons from NADH to the respiratory chain. The immediate electron acceptor for the enzyme is believed to be ubiquinone. In Hyaloraphidium curvatum (Lower fungus), this protein is NADH-ubiquinone oxidoreductase chain 2.